We begin with the raw amino-acid sequence, 279 residues long: B3 domain-containing protein Os05g0481400 (279 aa).

A disordered region spans residues 45–68 (ARLQKSTRASPKPRKKFEVGATEV). A DNA-binding region (TF-B3) is located at residues 139–230 (FVKTMVRSHV…RFKIYIIKAV (92 aa)). Composition is skewed to acidic residues over residues 233–244 (DANESEPADEEA) and 252–262 (TEDAAEQDDSP). Residues 233 to 279 (DANESEPADEEAIGDKDTSTEDAAEQDDSPNAEPLKGTKRRKLRGRR) are disordered. Residues 269 to 279 (GTKRRKLRGRR) show a composition bias toward basic residues.

The protein localises to the nucleus. The sequence is that of B3 domain-containing protein Os05g0481400 from Oryza sativa subsp. japonica (Rice).